Reading from the N-terminus, the 25-residue chain is Pancreatic triacylglycerol lipase (25 aa).

Cysteine 4 and cysteine 10 are oxidised to a cystine.

The protein belongs to the AB hydrolase superfamily. Lipase family. In terms of assembly, forms a 1:1 stoichiometric complex with (pro)colipase/CLPS.

It localises to the secreted. The enzyme catalyses a triacylglycerol + H2O = a diacylglycerol + a fatty acid + H(+). It catalyses the reaction 1,2,3-tributanoylglycerol + H2O = dibutanoylglycerol + butanoate + H(+). The catalysed reaction is 1,2,3-tri-(9Z-octadecenoyl)-glycerol + H2O = di-(9Z)-octadecenoylglycerol + (9Z)-octadecenoate + H(+). It carries out the reaction all-trans-retinyl hexadecanoate + H2O = all-trans-retinol + hexadecanoate + H(+). The enzyme catalyses 1,2-di-(9Z-octadecenoyl)-glycerol + H2O = (9Z-octadecenoyl)-glycerol + (9Z)-octadecenoate + H(+). With respect to regulation, inhibited by bile salts, is reactivated by (pro)colipase/CLPS. Its function is as follows. Plays an important role in fat metabolism. It preferentially splits the esters of long-chain fatty acids at positions 1 and 3, producing mainly 2-monoacylglycerol and free fatty acids, and shows considerably higher activity against insoluble emulsified substrates than against soluble ones. In Felis catus (Cat), this protein is Pancreatic triacylglycerol lipase (PNLIP).